The primary structure comprises 217 residues: Adenylate kinase (217 aa).

Position 11-16 (11-16) interacts with ATP; it reads GAGKGT. The NMP stretch occupies residues 31-60; that stretch reads STGDMFREAMANETPVGLEAKSYIDKGNLV. AMP-binding positions include Thr32, Arg37, 58-60, 86-89, and Gln93; these read NLV and GFPR. The segment at 127-165 is LID; that stretch reads ARYICKKCGATYNKISNPTKVEGTCDRCGGHEFFQREDD. Arg128 is an ATP binding site. Cys131 and Cys134 together coordinate Zn(2+). Residue 137 to 138 coordinates ATP; sequence TY. The Zn(2+) site is built by Cys151 and Cys154. Residues Arg162 and Arg173 each coordinate AMP. An ATP-binding site is contributed by Gln201.

The protein belongs to the adenylate kinase family. In terms of assembly, monomer.

The protein resides in the cytoplasm. The catalysed reaction is AMP + ATP = 2 ADP. Its pathway is purine metabolism; AMP biosynthesis via salvage pathway; AMP from ADP: step 1/1. Catalyzes the reversible transfer of the terminal phosphate group between ATP and AMP. Plays an important role in cellular energy homeostasis and in adenine nucleotide metabolism. The protein is Adenylate kinase of Lactobacillus johnsonii (strain CNCM I-12250 / La1 / NCC 533).